The sequence spans 293 residues: Protease HtpX (293 aa).

The next 2 helical transmembrane spans lie at I4–L24 and G34–S54. A Zn(2+)-binding site is contributed by H139. The active site involves E140. Zn(2+) is bound at residue H143. The next 2 membrane-spanning stretches (helical) occupy residues I158–L178 and L193–I213. A Zn(2+)-binding site is contributed by E222.

This sequence belongs to the peptidase M48B family. Zn(2+) is required as a cofactor.

It is found in the cell inner membrane. The polypeptide is Protease HtpX (Pectobacterium carotovorum subsp. carotovorum (strain PC1)).